The following is a 274-amino-acid chain: uncharacterized protein (274 aa).

A disordered region spans residues 235 to 274; the sequence is ETFDTQQDPKKTPETDKNAAYKGKEKKGKKEERGPRSIMK. Residues 241–274 are compositionally biased toward basic and acidic residues; it reads QDPKKTPETDKNAAYKGKEKKGKKEERGPRSIMK.

This is an uncharacterized protein from Treponema pallidum (strain Nichols).